Reading from the N-terminus, the 127-residue chain is Small ribosomal subunit protein uS11 (127 aa).

It belongs to the universal ribosomal protein uS11 family. As to quaternary structure, part of the 30S ribosomal subunit. Interacts with proteins S7 and S18. Binds to IF-3.

In terms of biological role, located on the platform of the 30S subunit, it bridges several disparate RNA helices of the 16S rRNA. Forms part of the Shine-Dalgarno cleft in the 70S ribosome. This chain is Small ribosomal subunit protein uS11, found in Streptococcus suis (strain 98HAH33).